We begin with the raw amino-acid sequence, 131 residues long: Fumarate reductase subunit C (131 aa).

The next 3 helical transmembrane spans lie at 30–50 (EGTAVPTVWFSIVLIYGLFAL), 61–81 (IGFLQNPVVVILNLITLAAAL), and 110–130 (IKGLWVVTAVVTVVILFVALF).

This sequence belongs to the FrdC family. In terms of assembly, part of an enzyme complex containing four subunits: a flavoprotein (FrdA), an iron-sulfur protein (FrdB), and two hydrophobic anchor proteins (FrdC and FrdD).

Its subcellular location is the cell inner membrane. Its function is as follows. Two distinct, membrane-bound, FAD-containing enzymes are responsible for the catalysis of fumarate and succinate interconversion; fumarate reductase is used in anaerobic growth, and succinate dehydrogenase is used in aerobic growth. Anchors the catalytic components of the fumarate reductase complex to the cell inner membrane, binds quinones. The chain is Fumarate reductase subunit C from Klebsiella pneumoniae subsp. pneumoniae (strain ATCC 700721 / MGH 78578).